The sequence spans 240 residues: Ribosomal RNA small subunit methyltransferase G (240 aa).

S-adenosyl-L-methionine-binding positions include glycine 78, phenylalanine 83, 129 to 130 (AE), and arginine 147. A disordered region spans residues 218–240 (RRQTSKKYPRKPGTPNKSPLLEN).

This sequence belongs to the methyltransferase superfamily. RNA methyltransferase RsmG family.

It localises to the cytoplasm. Functionally, specifically methylates the N7 position of guanine in position 535 of 16S rRNA. In Staphylococcus haemolyticus (strain JCSC1435), this protein is Ribosomal RNA small subunit methyltransferase G.